Consider the following 178-residue polypeptide: Cytochrome b6-f complex iron-sulfur subunit (178 aa).

A helical membrane pass occupies residues 20-42 (LLTFGSVTGVALGALYPVVNYFI). Positions 65-161 (ASGWLADHKE…VNVENDNVFV (97 aa)) constitute a Rieske domain. Cysteine 107, histidine 109, cysteine 125, and histidine 128 together coordinate [2Fe-2S] cluster. A disulfide bond links cysteine 112 and cysteine 127.

Belongs to the Rieske iron-sulfur protein family. As to quaternary structure, the 4 large subunits of the cytochrome b6-f complex are cytochrome b6, subunit IV (17 kDa polypeptide, PetD), cytochrome f and the Rieske protein, while the 4 small subunits are PetG, PetL, PetM and PetN. The complex functions as a dimer. [2Fe-2S] cluster is required as a cofactor.

The protein resides in the cellular thylakoid membrane. It carries out the reaction 2 oxidized [plastocyanin] + a plastoquinol + 2 H(+)(in) = 2 reduced [plastocyanin] + a plastoquinone + 4 H(+)(out). In terms of biological role, component of the cytochrome b6-f complex, which mediates electron transfer between photosystem II (PSII) and photosystem I (PSI), cyclic electron flow around PSI, and state transitions. The protein is Cytochrome b6-f complex iron-sulfur subunit of Synechococcus sp. (strain RCC307).